We begin with the raw amino-acid sequence, 214 residues long: Glycerol-3-phosphate acyltransferase (214 aa).

5 helical membrane-spanning segments follow: residues 4–24 (LIVAVVAYLIGSVSFAVIVSA), 52–72 (AAILTLIGDAFKGWLPVWFVV), 82–102 (DTSVAIAAVAVFLGHLYPAFF), 118–138 (LAINPILGVATLLTWLIVAFF), and 159–179 (FLFGPHIIALAIVVMSSLLVW).

The protein belongs to the PlsY family. As to quaternary structure, probably interacts with PlsX.

The protein localises to the cell inner membrane. It catalyses the reaction an acyl phosphate + sn-glycerol 3-phosphate = a 1-acyl-sn-glycero-3-phosphate + phosphate. It participates in lipid metabolism; phospholipid metabolism. In terms of biological role, catalyzes the transfer of an acyl group from acyl-phosphate (acyl-PO(4)) to glycerol-3-phosphate (G3P) to form lysophosphatidic acid (LPA). This enzyme utilizes acyl-phosphate as fatty acyl donor, but not acyl-CoA or acyl-ACP. The chain is Glycerol-3-phosphate acyltransferase from Paraburkholderia xenovorans (strain LB400).